A 532-amino-acid chain; its full sequence is Optineurin (532 aa).

Coiled coils occupy residues 27 to 143 (SMKN…LKLG) and 195 to 466 (EEVA…EEMM). A CCHC NOA-type zinc finger spans residues 502–532 (QPSITVYTCPKCNLTVPDMDTLQIHVMDCIT). C510, C513, H526, and C530 together coordinate Zn(2+).

It is found in the cytoplasm. The protein localises to the perinuclear region. The protein resides in the golgi apparatus. Its subcellular location is the trans-Golgi network. It localises to the cytoplasmic vesicle. It is found in the recycling endosome. The protein localises to the autophagosome. Probably part of the TNF-alpha signaling pathway that can shift the equilibrium toward induction of cell death. May act by regulating membrane trafficking and cellular morphogenesis. The sequence is that of Optineurin (optn) from Xenopus laevis (African clawed frog).